The sequence spans 418 residues: Probable serine/threonine-protein kinase DDB_G0280461 (418 aa).

Residues 14–271 enclose the Protein kinase domain; it reads KIEENEFSKG…IVQTLDQLAI (258 aa). Residues 20 to 28 and lysine 41 contribute to the ATP site; that span reads FSKGSFAKV. Aspartate 139 acts as the Proton acceptor in catalysis. Disordered regions lie at residues 327–356 and 377–418; these read NNNN…NNNN and SVNS…CLIN. A compositionally biased stretch (low complexity) spans 377-402; the sequence is SVNSSFSNSSLGSNGSNSSGTSTSSG. Residues 403 to 418 show a composition bias toward basic residues; the sequence is GKKRSQKRKSWKCLIN.

This sequence belongs to the protein kinase superfamily. TKL Ser/Thr protein kinase family.

The enzyme catalyses L-seryl-[protein] + ATP = O-phospho-L-seryl-[protein] + ADP + H(+). The catalysed reaction is L-threonyl-[protein] + ATP = O-phospho-L-threonyl-[protein] + ADP + H(+). The chain is Probable serine/threonine-protein kinase DDB_G0280461 from Dictyostelium discoideum (Social amoeba).